A 755-amino-acid chain; its full sequence is 1,4-alpha-glucan branching enzyme GlgB (755 aa).

D431 (nucleophile) is an active-site residue. Catalysis depends on E484, which acts as the Proton donor.

It belongs to the glycosyl hydrolase 13 family. GlgB subfamily. In terms of assembly, monomer.

It catalyses the reaction Transfers a segment of a (1-&gt;4)-alpha-D-glucan chain to a primary hydroxy group in a similar glucan chain.. It participates in glycan biosynthesis; glycogen biosynthesis. Catalyzes the formation of the alpha-1,6-glucosidic linkages in glycogen by scission of a 1,4-alpha-linked oligosaccharide from growing alpha-1,4-glucan chains and the subsequent attachment of the oligosaccharide to the alpha-1,6 position. In Prochlorococcus marinus (strain NATL1A), this protein is 1,4-alpha-glucan branching enzyme GlgB.